We begin with the raw amino-acid sequence, 807 residues long: Tyrosine-protein kinase receptor torso (807 aa).

The first 28 residues, 1–28 (MYSEGKLLKVFLIFAGFIIFSLCGEVVS), serve as a signal peptide directing secretion. Residues 29 to 370 (QRYPPAPGLL…RAFTPGMLRW (342 aa)) are Extracellular-facing. Cystine bridges form between Cys46/Cys61, Cys81/Cys203, Cys210/Cys239, and Cys259/Cys265. Residues Asn54, Asn171, Asn183, and Asn195 are each glycosylated (N-linked (GlcNAc...) asparagine). Residues Asn307, Asn323, and Asn344 are each glycosylated (N-linked (GlcNAc...) asparagine). Residues 371–391 (VWAGATAGAGCAAGGLLAATL) traverse the membrane as a helical segment. Topologically, residues 392–807 (LCCGHRRATS…SPPVIQTKTA (416 aa)) are cytoplasmic. Residues 439 to 738 (VLLHEVIGEG…PTFPELHQKL (300 aa)) enclose the Protein kinase domain. ATP-binding positions include 445–453 (IGEGAFGVV) and Lys468. The active-site Proton acceptor is Asp607.

The protein belongs to the protein kinase superfamily. Tyr protein kinase family. As to quaternary structure, homodimer; disulfide-linked. Mg(2+) is required as a cofactor. May be auto-phosphorylated on tyrosine residues. In terms of processing, at least one of the 3 cysteine residues Cys-381, Cys-393 or Cys-394 is involved in the formation of interchain disulfide bonds. The disulfide bond sites in the extracellular region are not involved in homodimer formation.

The protein resides in the cell membrane. It carries out the reaction L-tyrosyl-[protein] + ATP = O-phospho-L-tyrosyl-[protein] + ADP + H(+). Probable receptor tyrosine kinase. During postembryonic development, involved in the initiation of metamorphosis probably by inducing the production of ecdysone in response to prothoracicotropic hormone (PTTH). Binding to PTTH stimulates activation of canonical MAPK signaling leading to ERK phosphorylation. The chain is Tyrosine-protein kinase receptor torso from Bombyx mori (Silk moth).